The chain runs to 132 residues: Subtelomeric hrmA-associated cluster protein AFUB_079000 (132 aa).

Functionally, part of the subtelomeric hrmA-associated cluster (HAC) containing genes that alter the hyphal surface (such as reduced total chitin or increased beta-glucan exposure) and perturb inter-hyphal interactions within the developing biofilms, resulting in a loss of vertically aligned polarized growing filaments. Consequently, this hypoxia-typic morphotype (called H-MORPH) with altered biofilm architecture leads to increased hypoxia fitness, increased host inflammation, rapid disease progression, and mortality in a murine model of invasive aspergillosis. This chain is Subtelomeric hrmA-associated cluster protein AFUB_079000, found in Aspergillus fumigatus (strain CBS 144.89 / FGSC A1163 / CEA10) (Neosartorya fumigata).